A 529-amino-acid chain; its full sequence is Beta-galactoside alpha-2,6-sialyltransferase 2 (529 aa).

Over 1-11 (MKPHLKQWRQR) the chain is Cytoplasmic. A helical; Signal-anchor for type II membrane protein transmembrane segment spans residues 12 to 32 (MLFGLFAGGLLFLLIFIYFTD). At 33–529 (SNPAEPVPSS…PAPSPVIPHS (497 aa)) the chain is on the lumenal side. Residues 142–186 (SHSQGTLGFPSPGEPGPREGAFPAAQVQRRRVKKRHRRQRRSHVL) form a disordered region. The segment covering 169-183 (QRRRVKKRHRRQRRS) has biased composition (basic residues). Asn211 carries an N-linked (GlcNAc...) asparagine glycan. Intrachain disulfides connect Cys253/Cys519, Cys296/Cys448, and Cys466/Cys477.

The protein belongs to the glycosyltransferase 29 family.

The protein resides in the golgi apparatus. It is found in the golgi stack membrane. The enzyme catalyses a beta-D-galactoside + CMP-N-acetyl-beta-neuraminate = an N-acetyl-alpha-neuraminyl-(2-&gt;6)-beta-D-galactosyl derivative + CMP + H(+). Transfers sialic acid from the donor of substrate CMP-sialic acid to galactose containing acceptor substrates. Has alpha-2,6-sialyltransferase activity toward oligosaccharides that have the Gal-beta-1,4-GlcNAc sequence at the non-reducing end of their carbohydrate groups, but it has weak or no activities toward glycoproteins and glycolipids. The chain is Beta-galactoside alpha-2,6-sialyltransferase 2 (ST6GAL2) from Pan troglodytes (Chimpanzee).